Here is a 399-residue protein sequence, read N- to C-terminus: tRNA-specific 2-thiouridylase MnmA (399 aa).

ATP-binding positions include 18–25 (AMSGGVDS) and Leu44. Catalysis depends on Cys112, which acts as the Nucleophile. Cys112 and Cys213 are joined by a disulfide. ATP is bound at residue Gly136. An interaction with tRNA region spans residues 163 to 165 (RDQ). Catalysis depends on Cys213, which acts as the Cysteine persulfide intermediate.

The protein belongs to the MnmA/TRMU family.

The protein localises to the cytoplasm. The catalysed reaction is S-sulfanyl-L-cysteinyl-[protein] + uridine(34) in tRNA + AH2 + ATP = 2-thiouridine(34) in tRNA + L-cysteinyl-[protein] + A + AMP + diphosphate + H(+). Its function is as follows. Catalyzes the 2-thiolation of uridine at the wobble position (U34) of tRNA, leading to the formation of s(2)U34. In Rhizobium rhizogenes (strain K84 / ATCC BAA-868) (Agrobacterium radiobacter), this protein is tRNA-specific 2-thiouridylase MnmA.